Here is a 106-residue protein sequence, read N- to C-terminus: UPF0060 membrane protein AZC_0909 (106 aa).

4 consecutive transmembrane segments (helical) span residues 4–24, 27–47, 58–78, and 84–104; these read PLFA…WHVV, GGSP…AALL, AFAA…WAAE, and RFDA…LFAP.

The protein belongs to the UPF0060 family.

Its subcellular location is the cell inner membrane. The sequence is that of UPF0060 membrane protein AZC_0909 from Azorhizobium caulinodans (strain ATCC 43989 / DSM 5975 / JCM 20966 / LMG 6465 / NBRC 14845 / NCIMB 13405 / ORS 571).